The primary structure comprises 182 residues: Lipoprotein signal peptidase (182 aa).

Transmembrane regions (helical) follow at residues V12–W32, A68–V88, and I91–I111. Residues D127 and D140 contribute to the active site. A helical transmembrane segment spans residues V135–L155.

Belongs to the peptidase A8 family.

The protein resides in the cell membrane. It carries out the reaction Release of signal peptides from bacterial membrane prolipoproteins. Hydrolyzes -Xaa-Yaa-Zaa-|-(S,diacylglyceryl)Cys-, in which Xaa is hydrophobic (preferably Leu), and Yaa (Ala or Ser) and Zaa (Gly or Ala) have small, neutral side chains.. It participates in protein modification; lipoprotein biosynthesis (signal peptide cleavage). In terms of biological role, this protein specifically catalyzes the removal of signal peptides from prolipoproteins. The polypeptide is Lipoprotein signal peptidase (Bifidobacterium longum subsp. infantis (strain ATCC 15697 / DSM 20088 / JCM 1222 / NCTC 11817 / S12)).